Consider the following 248-residue polypeptide: Anamorsin homolog (248 aa).

Residues 4–129 (FKGLQKSLYI…ETGSSARLSF (126 aa)) are N-terminal SAM-like domain. A linker region spans residues 130–161 (AKKNASAVNVWKISGDDEELIDEEELLDEEDK). 4 residues coordinate [2Fe-2S] cluster: Cys172, Cys181, Cys184, and Cys186. Residues 172–186 (CSTTGKRKACKNCSC) form a fe-S binding site A region. Cys209, Cys212, Cys220, and Cys223 together coordinate [4Fe-4S] cluster. 2 short sequence motifs (cx2C motif) span residues 209–212 (CGNC) and 220–223 (CSTC). The tract at residues 209–223 (CGNCYLGDAFRCSTC) is fe-S binding site B.

This sequence belongs to the anamorsin family. Monomer. The cofactor is [2Fe-2S] cluster. [4Fe-4S] cluster serves as cofactor.

The protein resides in the cytoplasm. It localises to the mitochondrion intermembrane space. In terms of biological role, component of the cytosolic iron-sulfur (Fe-S) protein assembly (CIA) machinery. Required for the maturation of extramitochondrial Fe-S proteins. Part of an electron transfer chain functioning in an early step of cytosolic Fe-S biogenesis, facilitating the de novo assembly of a [4Fe-4S] cluster on the cytosolic Fe-S scaffold complex. Electrons are transferred from NADPH via a FAD- and FMN-containing diflavin oxidoreductase. Together with the diflavin oxidoreductase, also required for the assembly of the diferric tyrosyl radical cofactor of ribonucleotide reductase (RNR), probably by providing electrons for reduction during radical cofactor maturation in the catalytic small subunit. This is Anamorsin homolog from Drosophila melanogaster (Fruit fly).